Consider the following 185-residue polypeptide: Peptidyl-tRNA hydrolase (185 aa).

Tyr14 is a tRNA binding site. Residue His19 is the Proton acceptor of the active site. Residues Tyr65, Asn67, and Asn113 each contribute to the tRNA site.

The protein belongs to the PTH family. In terms of assembly, monomer.

It is found in the cytoplasm. The catalysed reaction is an N-acyl-L-alpha-aminoacyl-tRNA + H2O = an N-acyl-L-amino acid + a tRNA + H(+). In terms of biological role, hydrolyzes ribosome-free peptidyl-tRNAs (with 1 or more amino acids incorporated), which drop off the ribosome during protein synthesis, or as a result of ribosome stalling. Functionally, catalyzes the release of premature peptidyl moieties from peptidyl-tRNA molecules trapped in stalled 50S ribosomal subunits, and thus maintains levels of free tRNAs and 50S ribosomes. The polypeptide is Peptidyl-tRNA hydrolase (Rickettsia rickettsii (strain Iowa)).